The primary structure comprises 233 residues: MAKLSKRMRVIREKVDGTKEYSINEAIALLKELATAKFVESVDVAVNLGIDARKSDQNVRGATVLPHGTGREVRVAVFTQGANAEAAKAAGAELVGMDDLADLVKKGEMNFDVVIASPDAMRVVGQLGQILGPRGLMPNPKVGTVTPNVAEAVKNAKAGQVRYRNDKNGIIHTTLGKVSFNEVQLKENLEALLVALKKAKPSSAKGVFIKKVSISTTMGAGVAVDQASLEAQA.

Belongs to the universal ribosomal protein uL1 family. In terms of assembly, part of the 50S ribosomal subunit.

Binds directly to 23S rRNA. The L1 stalk is quite mobile in the ribosome, and is involved in E site tRNA release. In terms of biological role, protein L1 is also a translational repressor protein, it controls the translation of the L11 operon by binding to its mRNA. This chain is Large ribosomal subunit protein uL1, found in Aeromonas hydrophila subsp. hydrophila (strain ATCC 7966 / DSM 30187 / BCRC 13018 / CCUG 14551 / JCM 1027 / KCTC 2358 / NCIMB 9240 / NCTC 8049).